The sequence spans 484 residues: tRNA sulfurtransferase (484 aa).

Residues 63–167 form the THUMP domain; the sequence is QAFGERLACI…RDKLYMVTKR (105 aa). ATP contacts are provided by residues 185–186, Lys-267, Gly-289, and Gln-298; that span reads LI. Cys-346 and Cys-458 are joined by a disulfide. The Rhodanese domain maps to 406-484; it reads IETNEVVIDI…GYTNVKVYRP (79 aa). Cys-458 (cysteine persulfide intermediate) is an active-site residue.

This sequence belongs to the ThiI family.

The protein resides in the cytoplasm. The enzyme catalyses [ThiI sulfur-carrier protein]-S-sulfanyl-L-cysteine + a uridine in tRNA + 2 reduced [2Fe-2S]-[ferredoxin] + ATP + H(+) = [ThiI sulfur-carrier protein]-L-cysteine + a 4-thiouridine in tRNA + 2 oxidized [2Fe-2S]-[ferredoxin] + AMP + diphosphate. The catalysed reaction is [ThiS sulfur-carrier protein]-C-terminal Gly-Gly-AMP + S-sulfanyl-L-cysteinyl-[cysteine desulfurase] + AH2 = [ThiS sulfur-carrier protein]-C-terminal-Gly-aminoethanethioate + L-cysteinyl-[cysteine desulfurase] + A + AMP + 2 H(+). The protein operates within cofactor biosynthesis; thiamine diphosphate biosynthesis. Its function is as follows. Catalyzes the ATP-dependent transfer of a sulfur to tRNA to produce 4-thiouridine in position 8 of tRNAs, which functions as a near-UV photosensor. Also catalyzes the transfer of sulfur to the sulfur carrier protein ThiS, forming ThiS-thiocarboxylate. This is a step in the synthesis of thiazole, in the thiamine biosynthesis pathway. The sulfur is donated as persulfide by IscS. The chain is tRNA sulfurtransferase from Shewanella putrefaciens (strain CN-32 / ATCC BAA-453).